Here is a 145-residue protein sequence, read N- to C-terminus: D-aminoacyl-tRNA deacylase (145 aa).

The Gly-cisPro motif, important for rejection of L-amino acids signature appears at 137-138; sequence GP.

This sequence belongs to the DTD family. Homodimer.

It is found in the cytoplasm. It carries out the reaction glycyl-tRNA(Ala) + H2O = tRNA(Ala) + glycine + H(+). It catalyses the reaction a D-aminoacyl-tRNA + H2O = a tRNA + a D-alpha-amino acid + H(+). Functionally, an aminoacyl-tRNA editing enzyme that deacylates mischarged D-aminoacyl-tRNAs. Also deacylates mischarged glycyl-tRNA(Ala), protecting cells against glycine mischarging by AlaRS. Acts via tRNA-based rather than protein-based catalysis; rejects L-amino acids rather than detecting D-amino acids in the active site. By recycling D-aminoacyl-tRNA to D-amino acids and free tRNA molecules, this enzyme counteracts the toxicity associated with the formation of D-aminoacyl-tRNA entities in vivo and helps enforce protein L-homochirality. This chain is D-aminoacyl-tRNA deacylase, found in Pseudoalteromonas atlantica (strain T6c / ATCC BAA-1087).